The primary structure comprises 438 residues: Probable D-serine dehydratase (438 aa).

Position 114 is an N6-(pyridoxal phosphate)lysine (Lys114).

This sequence belongs to the serine/threonine dehydratase family. DsdA subfamily. Pyridoxal 5'-phosphate is required as a cofactor.

The enzyme catalyses D-serine = pyruvate + NH4(+). The chain is Probable D-serine dehydratase from Histophilus somni (strain 2336) (Haemophilus somnus).